Consider the following 290-residue polypeptide: GTPase Era (290 aa).

Residues 2–169 enclose the Era-type G domain; the sequence is KSGFVSIIGR…KDKIYANLQE (168 aa). The interval 10–17 is G1; that stretch reads GRPSTGKS. 10-17 provides a ligand contact to GTP; it reads GRPSTGKS. The segment at 36–40 is G2; that stretch reads QTTRN. The interval 57–60 is G3; sequence DTPG. Residues 57–61 and 119–122 each bind GTP; these read DTPGF and NKID. The G4 stretch occupies residues 119-122; sequence NKID. The segment at 148–150 is G5; the sequence is ISA. The 77-residue stretch at 200–276 folds into the KH type-2 domain; the sequence is LKEELPYSLY…DLFLQVKLRK (77 aa).

It belongs to the TRAFAC class TrmE-Era-EngA-EngB-Septin-like GTPase superfamily. Era GTPase family. In terms of assembly, monomer.

It localises to the cytoplasm. The protein resides in the cell inner membrane. Its function is as follows. An essential GTPase that binds both GDP and GTP, with rapid nucleotide exchange. Plays a role in 16S rRNA processing and 30S ribosomal subunit biogenesis and possibly also in cell cycle regulation and energy metabolism. The sequence is that of GTPase Era from Borrelia hermsii (strain HS1 / DAH).